A 409-amino-acid polypeptide reads, in one-letter code: Iron(III) salmochelin esterase (409 aa).

Belongs to the Fes family.

Its subcellular location is the cytoplasm. The enzyme catalyses Fe(III)-C-5-deoxy-beta-D-glucosyl-enterobactin + H2O = Fe(III)-{di[N-(2,3-dihydroxybenzoyl)-L-seryl]-N-(C-5-[deoxy-beta-D-glucosyl]-2,3-dihydroxybenzoyl)-L-serine} + H(+). It catalyses the reaction Fe(III)-{di[N-(2,3-dihydroxybenzoyl)-L-seryl]-N-(C-5-[deoxy-beta-D-glucosyl]-2,3-dihydroxybenzoyl)-L-serine} + H2O + H(+) = Fe(III)-{N-(2,3-dihydroxybenzoyl)-L-seryl-N-(C-5-[deoxy-beta-D-glucosyl]-2,3-dihydroxybenzoyl)-L-serine} + N-(2,3-dihydroxybenzoyl)-L-serine. It carries out the reaction Fe(III)-{N-(2,3-dihydroxybenzoyl)-L-seryl-[N-(C-5-[deoxy-beta-D-glucosyl]-2,3-dihydroxybenzoyl)-L-serine]2} + H2O + H(+) = Fe(III)-{N-(2,3-dihydroxybenzoyl)-L-seryl-N-(C-5-[deoxy-beta-D-glucosyl]-2,3-dihydroxybenzoyl)-L-serine} + N-(C-5-[deoxy-beta-D-glucosyl]-2,3-dihydroxybenzoyl)-L-serine. The catalysed reaction is Fe(III)-di(C-5-deoxy-beta-D-glucosyl)-enterobactin + H2O = Fe(III)-{N-(2,3-dihydroxybenzoyl)-L-seryl-[N-(C-5-[deoxy-beta-D-glucosyl]-2,3-dihydroxybenzoyl)-L-serine]2} + H(+). The enzyme catalyses Fe(III)-{N-(2,3-dihydroxybenzoyl)-L-seryl-[N-(C-5-[deoxy-beta-D-glucosyl]-2,3-dihydroxybenzoyl)-L-serine]2} + H2O + H(+) = Fe(III)-[N-(C-5-[deoxy-beta-D-glucosyl]-2,3-dihydroxybenzoyl)-L-serine]2 + N-(2,3-dihydroxybenzoyl)-L-serine. It catalyses the reaction Fe(III)-[N-(C-5-[deoxy-beta-D-glucosyl]-2,3-dihydroxybenzoyl)-L-serine]2 + H2O + H(+) = Fe(III)-[N-(C-5-[deoxy-beta-D-glucosyl]-2,3-dihydroxybenzoyl)-L-serine] + N-(C-5-[deoxy-beta-D-glucosyl]-2,3-dihydroxybenzoyl)-L-serine. Its function is as follows. Catalyzes the hydrolysis of both the apo and Fe3(+)-bound forms of enterobactin (Ent), monoglucosyl-C-Ent (MGE), diglucosyl-C-Ent (DGE) and triglucosyl-C-Ent (TGE). Shows higher catalytic efficiencies on Fe3(+)-bound forms. The initial linear trimer products are, in turn, very good substrates for further hydrolytic cleavage by IroD, leading to complete degradation of the trilactone to DHB-Ser and/or Glc-DHB-Ser monomers. Hydrolyzes MGE and DGE regioselectively. May be the ferric MGE/DGE esterase responsible for cytoplasmic iron release. This is Iron(III) salmochelin esterase from Escherichia coli O6:H1 (strain CFT073 / ATCC 700928 / UPEC).